A 130-amino-acid chain; its full sequence is Fluoride-specific ion channel FluC (130 aa).

4 helical membrane passes run 2 to 22 (GLLL…RFAL), 35 to 55 (IGIL…AAFL), 72 to 92 (LFVT…LDIL), and 107 to 127 (ILVS…FIMG). 2 residues coordinate Na(+): G79 and T82.

Belongs to the fluoride channel Fluc/FEX (TC 1.A.43) family.

It localises to the cell inner membrane. The catalysed reaction is fluoride(in) = fluoride(out). With respect to regulation, na(+) is not transported, but it plays an essential structural role and its presence is essential for fluoride channel function. In terms of biological role, fluoride-specific ion channel. Important for reducing fluoride concentration in the cell, thus reducing its toxicity. The polypeptide is Fluoride-specific ion channel FluC (Francisella philomiragia subsp. philomiragia (strain ATCC 25017 / CCUG 19701 / FSC 153 / O#319-036)).